Reading from the N-terminus, the 147-residue chain is Nucleoside diphosphate kinase (147 aa).

6 residues coordinate ATP: lysine 9, phenylalanine 57, arginine 85, threonine 91, arginine 102, and asparagine 112. The active-site Pros-phosphohistidine intermediate is the histidine 115.

It belongs to the NDK family. Homotetramer. Mg(2+) serves as cofactor.

The protein resides in the cytoplasm. It catalyses the reaction a 2'-deoxyribonucleoside 5'-diphosphate + ATP = a 2'-deoxyribonucleoside 5'-triphosphate + ADP. The catalysed reaction is a ribonucleoside 5'-diphosphate + ATP = a ribonucleoside 5'-triphosphate + ADP. In terms of biological role, major role in the synthesis of nucleoside triphosphates other than ATP. The ATP gamma phosphate is transferred to the NDP beta phosphate via a ping-pong mechanism, using a phosphorylated active-site intermediate. This Thermosipho melanesiensis (strain DSM 12029 / CIP 104789 / BI429) protein is Nucleoside diphosphate kinase.